The sequence spans 292 residues: UPF0696 protein C11orf68 homolog (292 aa).

Positions 1 to 10 (MAAAAAAVAG) are enriched in low complexity. The disordered stretch occupies residues 1 to 60 (MAAAAAAVAGAGRGGGGGADPGQERSRARSWVGAERSEGRRMEPNEELEEEDSPGGREDG). Gly residues predominate over residues 11–20 (AGRGGGGGAD). A compositionally biased stretch (basic and acidic residues) spans 35–44 (ERSEGRRMEP).

The protein belongs to the UPF0696 family.

The chain is UPF0696 protein C11orf68 homolog (Bles03) from Rattus norvegicus (Rat).